Here is a 336-residue protein sequence, read N- to C-terminus: tRNA N6-adenosine threonylcarbamoyltransferase (336 aa).

Fe cation is bound by residues H114 and H118. Residues 136 to 140 (LVSGG), D169, G182, D186, and N275 contribute to the substrate site. D302 serves as a coordination point for Fe cation.

It belongs to the KAE1 / TsaD family. The cofactor is Fe(2+).

It is found in the cytoplasm. The catalysed reaction is L-threonylcarbamoyladenylate + adenosine(37) in tRNA = N(6)-L-threonylcarbamoyladenosine(37) in tRNA + AMP + H(+). Functionally, required for the formation of a threonylcarbamoyl group on adenosine at position 37 (t(6)A37) in tRNAs that read codons beginning with adenine. Is involved in the transfer of the threonylcarbamoyl moiety of threonylcarbamoyl-AMP (TC-AMP) to the N6 group of A37, together with TsaE and TsaB. TsaD likely plays a direct catalytic role in this reaction. The protein is tRNA N6-adenosine threonylcarbamoyltransferase of Streptococcus agalactiae serotype V (strain ATCC BAA-611 / 2603 V/R).